Reading from the N-terminus, the 670-residue chain is DNA ligase (670 aa).

NAD(+) contacts are provided by residues 32–36, 81–82, and Glu110; these read DAEYD and SL. The active-site N6-AMP-lysine intermediate is Lys112. The NAD(+) site is built by Arg133, Glu170, Lys289, and Lys313. 4 residues coordinate Zn(2+): Cys407, Cys410, Cys425, and Cys431. One can recognise a BRCT domain in the interval 590 to 670; it reads ESQLSLKGQT…ALMDLLNAAN (81 aa).

It belongs to the NAD-dependent DNA ligase family. LigA subfamily. Mg(2+) serves as cofactor. It depends on Mn(2+) as a cofactor.

It carries out the reaction NAD(+) + (deoxyribonucleotide)n-3'-hydroxyl + 5'-phospho-(deoxyribonucleotide)m = (deoxyribonucleotide)n+m + AMP + beta-nicotinamide D-nucleotide.. DNA ligase that catalyzes the formation of phosphodiester linkages between 5'-phosphoryl and 3'-hydroxyl groups in double-stranded DNA using NAD as a coenzyme and as the energy source for the reaction. It is essential for DNA replication and repair of damaged DNA. In Shewanella frigidimarina (strain NCIMB 400), this protein is DNA ligase.